The primary structure comprises 635 residues: Glutamine sensor PIB2 (635 aa).

The interval 1–110 (MTALHSVSKT…GTGFVDRKQQ (110 aa)) is disordered. The may play a role in attenuating TORC1 signaling stretch occupies residues 1–164 (MTALHSVSKT…KTLPFTDDQR (164 aa)). Over residues 33–44 (RNHDYRGRKGDE) the composition is skewed to basic and acidic residues. Ser-46 and Ser-53 each carry phosphoserine. Thr-56 carries the post-translational modification Phosphothreonine. Over residues 67–85 (STHSEQSILSSISLKSMVN) the composition is skewed to polar residues. Phosphoserine is present on residues Ser-73, Ser-113, Ser-124, Ser-148, Ser-165, and Ser-174. Disordered stretches follow at residues 123–181 (NSAE…VSRG) and 224–254 (SSNLRLSKENKAKESSSSSTSSVSSSSTSKV). The segment covering 238–254 (SSSSSTSSVSSSSTSKV) has biased composition (low complexity). A phosphoserine mark is found at Ser-300, Ser-309, and Ser-381. Residues 304–440 (LPQPASSTNL…PTISNRNSAR (137 aa)) are required for interaction with TORC1. The FYVE-type; atypical zinc-finger motif lies at 452–527 (DSKRNSCRYC…ICDDCLVEYE (76 aa)). Zn(2+) contacts are provided by Cys-458, Cys-461, Cys-474, Cys-477, Cys-482, His-485, Cys-519, and Cys-522. 2 disordered regions span residues 534 to 557 (HNANTNEDNINVEEGEDDDNDNRK) and 570 to 623 (ALFR…GSVI). 2 stretches are compositionally biased toward acidic residues: residues 543–553 (INVEEGEDDDN) and 601–616 (EEADNENTGGEQEEGN). The may be required for TORC1 activation stretch occupies residues 620-635 (GSVIGSVPANWNWSSF).

Interacts with the TORC1 complex when activated by glutamine or cysteine. Interacts with TOR1; glutamine enhances the interaction. Interacts with KOG1; glutamine enhances the interaction. Interacts with TCO89. Interacts with LST8; glutamine enhances the interaction. Interacts with TOR2; glutamine enhances the interaction.

Its subcellular location is the vacuole membrane. With respect to regulation, activated by glutamine. May also be activated by cysteine. Functions as an intracellular glutamine sensor that directly activates the TORC1 signaling pathway, to promote cell growth when glutamine is available. May play a role in repressing NPR1 activity independently of TORC1 signaling. This is Glutamine sensor PIB2 from Saccharomyces cerevisiae (strain ATCC 204508 / S288c) (Baker's yeast).